The sequence spans 154 residues: Myoglobin (154 aa).

One can recognise a Globin domain in the interval Val2–Lys148. Ser4 carries the post-translational modification Phosphoserine. Residue His65 participates in nitrite binding. His65 provides a ligand contact to O2. Thr68 is subject to Phosphothreonine. Residue His94 coordinates heme b.

This sequence belongs to the globin family. In terms of assembly, monomeric.

Its subcellular location is the cytoplasm. The protein resides in the sarcoplasm. The catalysed reaction is Fe(III)-heme b-[protein] + nitric oxide + H2O = Fe(II)-heme b-[protein] + nitrite + 2 H(+). It carries out the reaction H2O2 + AH2 = A + 2 H2O. Its function is as follows. Monomeric heme protein which primary function is to store oxygen and facilitate its diffusion within muscle tissues. Reversibly binds oxygen through a pentacoordinated heme iron and enables its timely and efficient release as needed during periods of heightened demand. Depending on the oxidative conditions of tissues and cells, and in addition to its ability to bind oxygen, it also has a nitrite reductase activity whereby it regulates the production of bioactive nitric oxide. Under stress conditions, like hypoxia and anoxia, it also protects cells against reactive oxygen species thanks to its pseudoperoxidase activity. This is Myoglobin (MB) from Megaptera novaeangliae (Humpback whale).